Reading from the N-terminus, the 257-residue chain is Gamma-secretase subunit APH-1B (257 aa).

7 helical membrane-spanning segments follow: residues 5–25 (VFFGCAFIAFGPALALYVFTI), 32–52 (VIFLIAGAFFWLVSLLLSSVF), 66–86 (PVQNYLLIFGVLLSVCIQELF), 115–135 (LLAYVSGLGFGIMSGVFSFVN), 160–180 (AFMTLVVIMLHVFWGVVFFDG), 186–206 (WYTLLTVLLTHLVVSTQTFLS), and 213–233 (LVTAYIIMVLMGIWAFYVAGG).

Belongs to the APH-1 family. In terms of assembly, probable component of the gamma-secretase complex, a complex composed of a presenilin homodimer (PSEN1 or PSEN2), nicastrin (NCSTN), APH1 (APH1A or APH1B) and PEN2. Such minimal complex is sufficient for secretase activity, although other components may exist. Interacts with PSEN1 and PSEN2.

Its subcellular location is the membrane. Probable subunit of the gamma-secretase complex, an endoprotease complex that catalyzes the intramembrane cleavage of integral proteins such as Notch receptors and APP (amyloid-beta precursor protein). It probably represents a stabilizing cofactor for the presenilin homodimer that promotes the formation of a stable complex. Probably present in a minority of gamma-secretase complexes compared to APH1A. The chain is Gamma-secretase subunit APH-1B (Aph1b) from Mus musculus (Mouse).